A 136-amino-acid polypeptide reads, in one-letter code: Large ribosomal subunit protein bL17 (136 aa).

This sequence belongs to the bacterial ribosomal protein bL17 family. As to quaternary structure, part of the 50S ribosomal subunit. Contacts protein L32.

The sequence is that of Large ribosomal subunit protein bL17 from Rickettsia africae (strain ESF-5).